The sequence spans 624 residues: Chaperone protein HtpG (624 aa).

The tract at residues methionine 1–arginine 336 is a; substrate-binding. A b region spans residues glutamate 337–lysine 552. Residues leucine 553–serine 624 form a c region.

The protein belongs to the heat shock protein 90 family. In terms of assembly, homodimer.

The protein localises to the cytoplasm. Molecular chaperone. Has ATPase activity. The chain is Chaperone protein HtpG from Shigella flexneri.